A 243-amino-acid chain; its full sequence is Probable transcriptional regulator ycf27 (243 aa).

Residues 7-120 (KILVVDDEAS…ELEARIRSVL (114 aa)) form the Response regulatory domain. Asp56 bears the 4-aspartylphosphate mark. Positions 76–94 (DVPIIMLTALGEVCDRITG) form a DNA-binding region, H-T-H motif. A DNA-binding region (ompR/PhoB-type) is located at residues 135 to 236 (SGIISIGFLK…ARGTGYLFQR (102 aa)).

It localises to the plastid. Its subcellular location is the chloroplast. Its function is as follows. Probable promoter-specific protein mediating the interaction between DNA and RNA polymerase. This chain is Probable transcriptional regulator ycf27 (ycf27), found in Pyropia yezoensis (Susabi-nori).